A 1026-amino-acid chain; its full sequence is Probable DNA-directed RNA polymerase II subunit RPB1 homolog (1026 aa).

Zn(2+) is bound by residues C62, C65, C72, H75, C102, C105, and C142. Mg(2+) is bound by residues D588, D590, and D592.

The protein belongs to the RNA polymerase beta' chain family.

It carries out the reaction RNA(n) + a ribonucleoside 5'-triphosphate = RNA(n+1) + diphosphate. Functionally, component of the DNA-dependent RNA polymerase that catalyzes the transcription of DNA into RNA using the four ribonucleoside triphosphates as substrates. Largest and catalytic component of RNA polymerase II which synthesizes mRNA precursors and many functional non-coding RNAs. Forms the polymerase active center together with the second largest subunit. In Acheta domesticus (House cricket), this protein is Probable DNA-directed RNA polymerase II subunit RPB1 homolog.